Consider the following 61-residue polypeptide: uncharacterized protein (61 aa).

Residues 23 to 61 (VPTKWQDYKKPGPNQKYTSDGKKRRRIRRSQKSILGVRS) form a disordered region. Positions 44–53 (KKRRRIRRSQ) are enriched in basic residues.

This is an uncharacterized protein from Archaeoglobus fulgidus (strain ATCC 49558 / DSM 4304 / JCM 9628 / NBRC 100126 / VC-16).